The chain runs to 543 residues: Capsid vertex component 2 (543 aa).

Positions 1–54 (MWKLEKKYILRQNPSVFLNGTAFWTPHPQNILHIDRNSLRETKKNASLYRTRLL) are interaction with major capsid protein/MCP. Residues 101 to 120 (SPQLLPSPPKPLSPTTQSQP) are disordered.

This sequence belongs to the herpesviridae CVC2 protein family. In terms of assembly, heterodimerizes with CVC1. Interacts with major capsid protein/MCP and triplex capsid protein 1/TRX1 at the pentamer vertices. Interacts with the large tegument protein/LTP.

The protein localises to the virion. Its subcellular location is the host nucleus. In terms of biological role, capsid vertex-specific component that plays a role during viral DNA encapsidation, assuring correct genome cleavage and presumably stabilizing capsids that contain full-length viral genomes. Participates in the interaction between the capsid and the tegument through interaction with the large tegument protein/LTP. In Saimiri sciureus (Common squirrel monkey), this protein is Capsid vertex component 2.